The chain runs to 320 residues: Taste receptor type 2 member 129 (320 aa).

The Extracellular portion of the chain corresponds to 1 to 8; the sequence is MDGIVQNM. Residues 9–29 form a helical membrane-spanning segment; that stretch reads FTFIVIVEIIIGWIGNGFIAL. Over 30-55 the chain is Cytoplasmic; sequence VNCIHWYKRRKISALNQILTALAFSR. A helical membrane pass occupies residues 56 to 76; the sequence is IYLLLTVFTVIAVSTLYTHVL. Residues 77-88 are Extracellular-facing; it reads VTRRVVKLINFH. A helical transmembrane segment spans residues 89-109; that stretch reads LLFSNHFSMWLAACLGLYYFL. The Cytoplasmic portion of the chain corresponds to 110-128; it reads KIAHFPNSIFVYLKMRINQ. Residues 129–149 traverse the membrane as a helical segment; that stretch reads VVSGTLLMSLGLLFLNTLLIN. Residues 150-185 lie on the Extracellular side of the membrane; the sequence is SYIDTKIDDYREHLLYDFTSNNTASFYRVILVINNC. N-linked (GlcNAc...) asparagine glycosylation occurs at Asn170. A helical transmembrane segment spans residues 186–206; sequence IFTSIPFTLSQSTFLLLIFSL. Over 207–233 the chain is Cytoplasmic; it reads WRHYKKMQQHAQRCRDVLADAHIRVLQ. Residues 234 to 254 form a helical membrane-spanning segment; that stretch reads TMVTYVLLCAIFFLSLSMQIL. Topologically, residues 255–264 are extracellular; sequence RSELLKNILY. A helical transmembrane segment spans residues 265-285; it reads VRFCEIVAAVFPSGHSCVLIC. Over 286–320 the chain is Cytoplasmic; that stretch reads RDTNLRGTFLSVLSWLKQRFTSWIPNINCRSSCIF.

The protein belongs to the G-protein coupled receptor T2R family.

It is found in the membrane. Functionally, putative taste receptor which may play a role in the perception of bitterness. The protein is Taste receptor type 2 member 129 of Mus musculus (Mouse).